A 122-amino-acid chain; its full sequence is Vitelline membrane protein 15a-3 (122 aa).

The first 17 residues, 1-17 (MNKFIILALFAVAAASA), serve as a signal peptide directing secretion. Pro residues predominate over residues 21–49 (YPPPPPKPYHAPPPPPHHAHPPPPPPPPA). Disordered regions lie at residues 21–63 (YPPP…APVV) and 103–122 (PAPA…QFEE). One can recognise a VM domain in the interval 69–109 (HAPHAKCGANLLVGCAPSVAHAPCVPLHGHGHGYPAPAPHY).

The protein belongs to the vitelline membrane protein family. Expressed in the middle and posterior regions of the follicle cells.

It localises to the secreted. This is Vitelline membrane protein 15a-3 from Aedes aegypti (Yellowfever mosquito).